The sequence spans 324 residues: Probable pectinesterase A (324 aa).

The first 19 residues, 1 to 19, serve as a signal peptide directing secretion; the sequence is MYLPSLVLGLLGFGLTAST. Residue Asn27 is glycosylated (N-linked (GlcNAc...) asparagine). Residue Gln142 participates in substrate binding. The active-site Proton donor is the Asp165. Catalysis depends on Asp186, which acts as the Nucleophile. Positions 246 and 248 each coordinate substrate.

This sequence belongs to the pectinesterase family.

It is found in the secreted. It catalyses the reaction [(1-&gt;4)-alpha-D-galacturonosyl methyl ester](n) + n H2O = [(1-&gt;4)-alpha-D-galacturonosyl](n) + n methanol + n H(+). It participates in glycan metabolism; pectin degradation; 2-dehydro-3-deoxy-D-gluconate from pectin: step 1/5. Involved in maceration and soft-rotting of plant tissue. The protein is Probable pectinesterase A (pmeA) of Aspergillus fumigatus (strain CBS 144.89 / FGSC A1163 / CEA10) (Neosartorya fumigata).